Here is a 595-residue protein sequence, read N- to C-terminus: Wee1-like protein kinase 1-B (595 aa).

The span at 1-17 shows a compositional bias: polar residues; that stretch reads MNVQPRNMNVQPRNMNV. The disordered stretch occupies residues 1–127; the sequence is MNVQPRNMNV…CPGTPPHKTF (127 aa). The span at 111-122 shows a compositional bias: pro residues; it reads PTSPIPECPGTP. A Phosphothreonine; by cdk1 modification is found at Thr186. Residues 248–518 form the Protein kinase domain; the sequence is FHELEKIGSG…SVALVKHSVL (271 aa). Residues 254-262 and Lys277 contribute to the ATP site; that span reads IGSGEFGSV. Asp375 functions as the Proton acceptor in the catalytic mechanism. Mg(2+)-binding residues include Asn380 and Asp412. Residues 526–563 adopt a coiled-coil conformation; it reads AEQLRIELDAEKFKNALLQKELKKAQIAKAAAEERAHF.

It belongs to the protein kinase superfamily. Ser/Thr protein kinase family. WEE1 subfamily. Interacts (when phosphorylated at Thr-186) with pin1. Post-translationally, phosphorylation at Thr-186 during M-phase by cdk1 inhibits the kinase activity and leads to interaction with pin1. In terms of tissue distribution, zygotically expressed. Present in oocytes and postgastrula embryos (at least until the tailbud stage). Expression begins at the midblastula stage and increases after the early gastrula stage.

It localises to the nucleus. The enzyme catalyses L-tyrosyl-[protein] + ATP = O-phospho-L-tyrosyl-[protein] + ADP + H(+). Functionally, acts as a zygotic negative regulator of entry into mitosis (G2 to M transition) by protecting the nucleus from cytoplasmically activated cyclin B1-complexed cdk1 before the onset of mitosis by mediating phosphorylation of cdk1 on 'Tyr-15'. Specifically phosphorylates and inactivates cyclin B1-complexed cdk1 reaching a maximum during G2 phase and a minimum as cells enter M phase. Phosphorylation of cyclin B1-cdk1 occurs exclusively on 'Tyr-15' and phosphorylation of monomeric cdk1 does not occur. The polypeptide is Wee1-like protein kinase 1-B (wee1-b) (Xenopus laevis (African clawed frog)).